We begin with the raw amino-acid sequence, 551 residues long: Structure-specific endonuclease subunit MUS81 (551 aa).

Residues 84–93 (HRTSGGDHAP) show a composition bias toward basic and acidic residues. The disordered stretch occupies residues 84-130 (HRTSGGDHAPDSPSGENSPAPQGRLAEVQDSSMPVPAQPKAGGSGSY). Phosphoserine occurs at positions 95 and 101. The interval 125 to 244 (GGSGSYWPAR…PGEETAVPGA (120 aa)) is interaction with BLM. Positions 131-230 (WPARHSGARV…GLSLLNVGIG (100 aa)) are winged helix domain (WHD); critical for endonuclease activity. An ERCC4 domain is found at 270–372 (LLCVDIGETR…RRVYLVEEHG (103 aa)). Catalysis depends on residues Asp274, Glu277, and Asp307. Mg(2+) is bound by residues Asp274, Glu277, Asp307, Glu333, and Arg334. A helix-hairpin-helix (2HhH); involved in DNA recognition and bending region spans residues 471–545 (VREVFARQLM…LSRTLSQLYC (75 aa)).

It belongs to the XPF family. In terms of assembly, part of the heterodimeric DNA structure-specific endonuclease complex MUS81-EME1. Part of the heterodimeric DNA structure-specific endonuclease complex MUS81-EME2. Interacts with BLM; may stimulate the endonuclease activity of MUS81. Interacts with SLX4/BTBD12; this interaction is direct and links the MUS81-EME1 complex to SLX4, which may coordinate the action of the structure-specific endonuclease during DNA repair. Interacts with DCLRE1B/Apollo. Interacts with RECQL5; this interaction stimulates mitotic DNA synthesis. Interacts with CHEK2. It depends on Mg(2+) as a cofactor. Widely expressed.

The protein resides in the nucleus. The protein localises to the nucleolus. Catalytic subunit of two functionally distinct, structure-specific, heterodimeric DNA endonucleases MUS81-EME1 and MUS81-EME2 that are involved in the maintenance of genome stability. Both endonucleases have essentially the same substrate specificity though MUS81-EME2 is more active than its MUS81-EME1 counterpart. Both cleave 3'-flaps and nicked Holliday junctions, and exhibit limited endonuclease activity with 5' flaps and nicked double-stranded DNAs. MUS81-EME2 which is active during the replication of DNA is more specifically involved in replication fork processing. Replication forks frequently encounter obstacles to their passage, including DNA base lesions, DNA interstrand cross-links, difficult-to-replicate sequences, transcription bubbles, or tightly bound proteins. One mechanism for the restart of a stalled replication fork involves nucleolytic cleavage mediated by the MUS81-EME2 endonuclease. By acting upon the stalled fork, MUS81-EME2 generates a DNA double-strand break (DSB) that can be repaired by homologous recombination, leading to the restoration of an active fork. MUS81-EME2 could also function in telomere maintenance. MUS81-EME1, on the other hand, is active later in the cell cycle and functions in the resolution of mitotic recombination intermediates including the Holliday junctions, the four-way DNA intermediates that form during homologous recombination. This chain is Structure-specific endonuclease subunit MUS81, found in Homo sapiens (Human).